A 257-amino-acid chain; its full sequence is MLAKRLVPCLDVKDGKVVKGVQFRNHEIVGDIVPLAARYAEEGADELVFYDITASAHERVVDKSWVSRVAEQIDIPFCVAGGIKTISQARELLAFGADKISINSPALTDPSLISRLQDEFGRQCIVIGIDSFFDASSNSYKVKQFTGDEAATKDTQWFTQDWVEEVQKRGCGEIVLNVMNQDGVRGGYDIKQLSLVRAICDVPLIASGGAGTMAHFRDVFIEAKVDAALAASVFHKAIINIGELKAYLAAEGIAIRR.

Active-site residues include D11 and D130.

The protein belongs to the HisA/HisF family. As to quaternary structure, heterodimer of HisH and HisF.

It localises to the cytoplasm. It catalyses the reaction 5-[(5-phospho-1-deoxy-D-ribulos-1-ylimino)methylamino]-1-(5-phospho-beta-D-ribosyl)imidazole-4-carboxamide + L-glutamine = D-erythro-1-(imidazol-4-yl)glycerol 3-phosphate + 5-amino-1-(5-phospho-beta-D-ribosyl)imidazole-4-carboxamide + L-glutamate + H(+). Its pathway is amino-acid biosynthesis; L-histidine biosynthesis; L-histidine from 5-phospho-alpha-D-ribose 1-diphosphate: step 5/9. In terms of biological role, IGPS catalyzes the conversion of PRFAR and glutamine to IGP, AICAR and glutamate. The HisF subunit catalyzes the cyclization activity that produces IGP and AICAR from PRFAR using the ammonia provided by the HisH subunit. In Shewanella sp. (strain W3-18-1), this protein is Imidazole glycerol phosphate synthase subunit HisF.